The primary structure comprises 321 residues: Transcriptional activator protein Pur-alpha (321 aa).

A disordered region spans residues 1–54 (MADRDSGSEQGGAALGSGGSLGHPGSGSGSGGGGGGGGGGGGSGGGGGAPGGLQ). An N-acetylalanine modification is found at Ala-2. Residues 9–51 (EQGGAALGSGGSLGHPGSGSGSGGGGGGGGGGGGSGGGGGAPG) are compositionally biased toward gly residues. Ser-181 carries the phosphoserine modification. Residues 294–313 (LHQQQQQQQEETTAATLLLQ) are compositionally biased toward low complexity. Positions 294–321 (LHQQQQQQQEETTAATLLLQGEEEGEED) are disordered.

It belongs to the PUR DNA-binding protein family. Homodimer, heterodimer with PURB and heterotrimer with PURB and YBX1/Y-box protein 1. Interacts with FMR1; this interaction occurs in association with polyribosome.

The protein localises to the nucleus. In terms of biological role, this is a probable transcription activator that specifically binds the purine-rich single strand of the PUR element located upstream of the c-Myc gene. May play a role in the initiation of DNA replication and in recombination. The protein is Transcriptional activator protein Pur-alpha (Pura) of Mus musculus (Mouse).